The sequence spans 351 residues: Sulfate/thiosulfate import ATP-binding protein CysA (351 aa).

Positions 3-237 constitute an ABC transporter domain; it reads ITVRNLHKRF…PRSAFVYEFL (235 aa). 35-42 is an ATP binding site; it reads GPSGCGKT.

It belongs to the ABC transporter superfamily. Sulfate/tungstate importer (TC 3.A.1.6) family. As to quaternary structure, the complex is composed of two ATP-binding proteins (CysA), two transmembrane proteins (CysT and CysW) and a solute-binding protein (CysP).

Its subcellular location is the cell inner membrane. The catalysed reaction is sulfate(out) + ATP + H2O = sulfate(in) + ADP + phosphate + H(+). It catalyses the reaction thiosulfate(out) + ATP + H2O = thiosulfate(in) + ADP + phosphate + H(+). Part of the ABC transporter complex CysAWTP involved in sulfate/thiosulfate import. Responsible for energy coupling to the transport system. The sequence is that of Sulfate/thiosulfate import ATP-binding protein CysA from Burkholderia mallei (strain ATCC 23344).